A 454-amino-acid chain; its full sequence is Allantoinase (454 aa).

Residues histidine 59, histidine 61, lysine 150, histidine 190, histidine 246, and aspartate 319 each coordinate Zn(2+). An N6-carboxylysine modification is found at lysine 150.

This sequence belongs to the metallo-dependent hydrolases superfamily. Allantoinase family. Homotetramer. Zn(2+) is required as a cofactor. In terms of processing, carboxylation allows a single lysine to coordinate two zinc ions.

It carries out the reaction (S)-allantoin + H2O = allantoate + H(+). It functions in the pathway nitrogen metabolism; (S)-allantoin degradation; allantoate from (S)-allantoin: step 1/1. Its function is as follows. Catalyzes the conversion of allantoin (5-ureidohydantoin) to allantoic acid by hydrolytic cleavage of the five-member hydantoin ring. This is Allantoinase from Bacillus licheniformis (strain ATCC 14580 / DSM 13 / JCM 2505 / CCUG 7422 / NBRC 12200 / NCIMB 9375 / NCTC 10341 / NRRL NRS-1264 / Gibson 46).